Here is a 388-residue protein sequence, read N- to C-terminus: Chorismate synthase (388 aa).

NADP(+)-binding residues include Arg-39 and Arg-45. FMN-binding positions include 130-132 (RSS), 251-252 (NA), Gly-296, 311-315 (KPIPT), and Arg-337.

This sequence belongs to the chorismate synthase family. As to quaternary structure, homotetramer. Requires FMNH2 as cofactor.

The catalysed reaction is 5-O-(1-carboxyvinyl)-3-phosphoshikimate = chorismate + phosphate. It functions in the pathway metabolic intermediate biosynthesis; chorismate biosynthesis; chorismate from D-erythrose 4-phosphate and phosphoenolpyruvate: step 7/7. Catalyzes the anti-1,4-elimination of the C-3 phosphate and the C-6 proR hydrogen from 5-enolpyruvylshikimate-3-phosphate (EPSP) to yield chorismate, which is the branch point compound that serves as the starting substrate for the three terminal pathways of aromatic amino acid biosynthesis. This reaction introduces a second double bond into the aromatic ring system. The polypeptide is Chorismate synthase (Streptococcus uberis (strain ATCC BAA-854 / 0140J)).